The following is a 381-amino-acid chain: uncharacterized protein (381 aa).

The chain crosses the membrane as a helical span at residues 3–23 (GAVAGLVFLAVLVIFAIIVVA).

The protein belongs to the band 7/mec-2 family.

The protein resides in the membrane. This is an uncharacterized protein from Mycobacterium bovis (strain ATCC BAA-935 / AF2122/97).